The sequence spans 42 residues: Photosystem I reaction center subunit IX (42 aa).

A helical transmembrane segment spans residues 7–27; it reads YLSTAPVLATLWFGFLAGLLI.

Belongs to the PsaJ family.

It localises to the plastid. Its subcellular location is the chloroplast thylakoid membrane. May help in the organization of the PsaE and PsaF subunits. In Huperzia lucidula (Shining clubmoss), this protein is Photosystem I reaction center subunit IX.